A 71-amino-acid chain; its full sequence is MKLLVLLVTLLVLSWTSAEDLGDQEILENNEDNNHESELGEPAAQHTDDETSQLGQALIPRCRKMPGVKMC.

The signal sequence occupies residues 1-18; sequence MKLLVLLVTLLVLSWTSA. The propeptide occupies 19–45; the sequence is EDLGDQEILENNEDNNHESELGEPAAQ. The span at 22–31 shows a compositional bias: acidic residues; the sequence is GDQEILENNE. A disordered region spans residues 22–54; sequence GDQEILENNEDNNHESELGEPAAQHTDDETSQL. Cysteines 62 and 71 form a disulfide.

The protein belongs to the natterin family. Expressed by the venom gland.

It is found in the secreted. With respect to regulation, inhibited by tissue-kallikrein inhibitor TKI and trasylol. Plasma kallikrein inhibitor PKSI527 and classical inhibitors of serine-, metallo-, thiol- or aspartate-peptidases evokes a minor inhibition of the peptide digestion. Functionally, shows nociceptive, edema-inducing and kininogenase activity with release of kallidin from low molecular weight kininogen. The cleavage occurs at Met-Lys bonds. This Thalassophryne nattereri (Copper Joe toadfish) protein is Natterin-P.